The chain runs to 617 residues: Erythritol-mannosyl-transferase 1 (617 aa).

2 disordered regions span residues 365–396 and 567–617; these read RNPGSPGFTSPLNSPTAVATPKWDEKRPIDSR and RQRK…VTNP. Positions 371 to 381 are enriched in polar residues; that stretch reads GFTSPLNSPTA. Positions 386 to 396 are enriched in basic and acidic residues; it reads KWDEKRPIDSR. Over residues 578-603 the composition is skewed to polar residues; that stretch reads TAKTSLSVDTTEVATPTFTDTETSLS.

The protein belongs to the UDP-glycosyltransferase family.

It participates in secondary metabolite biosynthesis. Its function is as follows. Glycosyltransferase; part of the gene cluster that mediates the biosynthesis of mannosylerythritol lipids (MELs), surface-active substances that enhance the availability of water-insoluble substrates. Depending on the number of acetyl groups, mannosylerythritol lipids can be differentiated into MEL A (fully acetylated), MEL B and MEL C (monoacetylated at R-6 and R-4, respectively), and the fully deacetylated MEL D. The first step in the pathway is the generation of mannosylerythritol by the glycosyltransferase EMT1 which catalyzes the transfer of GDP-mannose to the C-4 atom of meso-erythritol. This reaction has to be stereospecific, since only mannosyl-D-erythritol is generated. The produced disaccharide is subsequently acylated with fatty acids of various lengths by the acyltransferases MAC1 and MAC2 at positions C-2 and C-3, repectively. The existence of MEL derivatives which carry an acetyl group at C-2 implies that at least MAC1 also accepts acetyl-CoA as a donor. The final step of MEL biosynthesis is the acetylation of the fully acylated mannosylerythritol lipids catalyzed by the acetyl-CoA-dependent acetyltransferase MAT1. MAT1 displays a relaxed regioselectivity and is able to transfer acetylgroups to both positions C-4 and C-6 of the mannosyl moiety. The protein is Erythritol-mannosyl-transferase 1 of Pseudozyma antarctica (strain T-34) (Yeast).